The following is a 1360-amino-acid chain: Probable inactive protein kinase DDB_G0270444 (1360 aa).

WD repeat units lie at residues 44–83 (SSKR…IKQL), 109–152 (IRNI…AVYN), 166–205 (TTSA…IMGT), and 208–247 (GHSR…QITG). The Protein kinase domain maps to 636–954 (EKSIQTYLSN…IEQALSHPFI (319 aa)). Residues 959-979 (KQQQQQQQQKQQQQQQQQQQQ) are compositionally biased toward low complexity. Disordered regions lie at residues 959 to 989 (KQQQ…DSLT), 1258 to 1311 (IISE…VEEE), and 1331 to 1360 (EVEE…SNDF). Coiled-coil stretches lie at residues 1014–1269 (SKIK…QEGE) and 1297–1352 (NASD…QVED). The segment covering 1291 to 1300 (LERDNKNASD) has biased composition (basic and acidic residues). Composition is skewed to acidic residues over residues 1301 to 1311 (HDDEQQFVEEE) and 1331 to 1354 (EVEE…EDDT).

Belongs to the protein kinase superfamily. CMGC Ser/Thr protein kinase family.

This chain is Probable inactive protein kinase DDB_G0270444, found in Dictyostelium discoideum (Social amoeba).